The chain runs to 413 residues: Cardiolipin synthase B (413 aa).

PLD phosphodiesterase domains lie at 108 to 135 and 285 to 312; these read IFRR…SAEH and RRRP…DPLS. Residues His113, Lys115, Asp120, His290, Lys292, and Asp297 contribute to the active site. Residues 388 to 413 form a disordered region; it reads AQVPPPAQPEMETQDRVDPENSGVKP.

This sequence belongs to the phospholipase D family. Cardiolipin synthase subfamily. ClsB sub-subfamily.

Its subcellular location is the cell membrane. It catalyses the reaction 2 a 1,2-diacyl-sn-glycero-3-phospho-(1'-sn-glycerol) = a cardiolipin + glycerol. In terms of biological role, catalyzes the phosphatidyl group transfer from one phosphatidylglycerol molecule to another to form cardiolipin (CL) (diphosphatidylglycerol) and glycerol. This is Cardiolipin synthase B from Salmonella typhi.